A 530-amino-acid chain; its full sequence is MNNARPIHRALLSVSDKTGIVEFAKALAERGVELLSTGGTARLLAEQGLTVTEVSDYTGFPEMMDGRVKTLHPKVHGGILGRRGQDDAVMNTHGIQPIDMVVVNLYPFAQTVANPNCTLADAVENIDIGGPTMVRSAAKNHKDVAIVVNAHDYDRVIREMDANHNSLTLATRFDLAIAAFEHTAAYDGMIANYFGTLVPSYGDNKEGDEESKFPRTFNAQFIKKQDMRYGENSHQAAAFYVEANPQEASVATARQIQGKALSYNNIADTDAALECVKEFSEPACVIVKHANPCGVALGDDLLQAYNRAYQTDPTSAFGGIIAFNRELDGETARAIIERQFVEVIIAPKVSQAAIDIVAAKQNVRLLECGEWQGQTTGFDLKRVNGGLLVQDRDQGMVAQDDLQVVSTRQPSDAELKDALFCWKVAKYVKSNAIVYAKGDMTIGIGAGQMSRVYSAKIAGIKAADEGLEVAGSVMASDAFFPFRDGIDAAAEAGITCVIQPGGSMRDQEVIDAANEHGMAMIFTGMRHFRH.

An MGS-like domain is found at 1–148 (MNNARPIHRA…KNHKDVAIVV (148 aa)).

The protein belongs to the PurH family.

It catalyses the reaction (6R)-10-formyltetrahydrofolate + 5-amino-1-(5-phospho-beta-D-ribosyl)imidazole-4-carboxamide = 5-formamido-1-(5-phospho-D-ribosyl)imidazole-4-carboxamide + (6S)-5,6,7,8-tetrahydrofolate. The catalysed reaction is IMP + H2O = 5-formamido-1-(5-phospho-D-ribosyl)imidazole-4-carboxamide. It participates in purine metabolism; IMP biosynthesis via de novo pathway; 5-formamido-1-(5-phospho-D-ribosyl)imidazole-4-carboxamide from 5-amino-1-(5-phospho-D-ribosyl)imidazole-4-carboxamide (10-formyl THF route): step 1/1. Its pathway is purine metabolism; IMP biosynthesis via de novo pathway; IMP from 5-formamido-1-(5-phospho-D-ribosyl)imidazole-4-carboxamide: step 1/1. This is Bifunctional purine biosynthesis protein PurH from Vibrio cholerae serotype O1 (strain M66-2).